Here is a 1293-residue protein sequence, read N- to C-terminus: Phosphoribosylformylglycinamidine synthase (1293 aa).

Residues 308–319 (GAATGAGGEIRD) and A675 each bind ATP. Residues D676, E715, N719, and D883 each coordinate Mg(2+). S885 lines the ATP pocket. The Glutamine amidotransferase type-1 domain maps to 1040–1293 (MAILREQGVN…MFRNARKFIG (254 aa)). The active-site Nucleophile is the C1133. Active-site residues include H1258 and E1260.

The protein in the N-terminal section; belongs to the FGAMS family. As to quaternary structure, monomer.

It localises to the cytoplasm. It catalyses the reaction N(2)-formyl-N(1)-(5-phospho-beta-D-ribosyl)glycinamide + L-glutamine + ATP + H2O = 2-formamido-N(1)-(5-O-phospho-beta-D-ribosyl)acetamidine + L-glutamate + ADP + phosphate + H(+). Its pathway is purine metabolism; IMP biosynthesis via de novo pathway; 5-amino-1-(5-phospho-D-ribosyl)imidazole from N(2)-formyl-N(1)-(5-phospho-D-ribosyl)glycinamide: step 1/2. Its function is as follows. Phosphoribosylformylglycinamidine synthase involved in the purines biosynthetic pathway. Catalyzes the ATP-dependent conversion of formylglycinamide ribonucleotide (FGAR) and glutamine to yield formylglycinamidine ribonucleotide (FGAM) and glutamate. The protein is Phosphoribosylformylglycinamidine synthase of Methylobacillus flagellatus (strain ATCC 51484 / DSM 6875 / VKM B-1610 / KT).